Reading from the N-terminus, the 579-residue chain is Glutamine--tRNA ligase (579 aa).

The short motif at 41–51 is the 'HIGH' region element; the sequence is PEPNGYLHIGH. Residues 42–44 and 48–54 contribute to the ATP site; these read EPN and HIGHAKA. L-glutamine contacts are provided by Asp74 and Tyr218. Residues Thr237, 285–286, and 293–295 each bind ATP; these read RL and MSK. Positions 292–296 match the 'KMSKS' region motif; that stretch reads VMSKR.

The protein belongs to the class-I aminoacyl-tRNA synthetase family. As to quaternary structure, monomer.

The protein resides in the cytoplasm. It carries out the reaction tRNA(Gln) + L-glutamine + ATP = L-glutaminyl-tRNA(Gln) + AMP + diphosphate. This chain is Glutamine--tRNA ligase, found in Xanthomonas oryzae pv. oryzae (strain MAFF 311018).